Reading from the N-terminus, the 304-residue chain is D-alanine--D-alanine ligase (304 aa).

The ATP-grasp domain maps to 101 to 298 (KKIFIKNKIL…FIKLIEWILK (198 aa)). Position 131–184 (131–184 (EKNLKFPVVVKPINEGSSVHVYICDKTNILKNLKVLKSYNEILIEEFIPGREIQ)) interacts with ATP. Mg(2+)-binding residues include Asp253, Glu265, and Asn267.

It belongs to the D-alanine--D-alanine ligase family. Requires Mg(2+) as cofactor. Mn(2+) serves as cofactor.

The protein localises to the cytoplasm. It carries out the reaction 2 D-alanine + ATP = D-alanyl-D-alanine + ADP + phosphate + H(+). Its pathway is cell wall biogenesis; peptidoglycan biosynthesis. In terms of biological role, cell wall formation. In Pelagibacter ubique (strain HTCC1062), this protein is D-alanine--D-alanine ligase.